The sequence spans 450 residues: Trehalose/maltose-binding protein MalE (450 aa).

A signal peptide spans 1 to 24 (MNVKKVLLGLFLVGVLGIAVVASG). Residues Glu57, Thr84, Arg89, Asp110, Tyr161, Asp163, Tyr217, Glu279, Trp297, Tyr299, Gly334, Trp335, Trp371, and Arg404 each coordinate alpha,alpha-trehalose.

This sequence belongs to the bacterial solute-binding protein 1 family. The complex is composed of two ATP-binding proteins (MalK), two transmembrane proteins (MalG and MalF) and a solute-binding protein (MalE). In terms of processing, glycosylated.

It is found in the cell membrane. Functionally, part of the ABC transporter complex MalEFGK involved in trehalose/maltose import. Binds maltose and trehalose. In Thermococcus litoralis (strain ATCC 51850 / DSM 5473 / JCM 8560 / NS-C), this protein is Trehalose/maltose-binding protein MalE (malE).